The chain runs to 462 residues: A-type ATP synthase subunit B (462 aa).

Belongs to the ATPase alpha/beta chains family. As to quaternary structure, has multiple subunits with at least A(3), B(3), C, D, E, F, H, I and proteolipid K(x).

Its subcellular location is the cell membrane. Its function is as follows. Component of the A-type ATP synthase that produces ATP from ADP in the presence of a proton gradient across the membrane. The B chain is a regulatory subunit. This chain is A-type ATP synthase subunit B, found in Methanococcus maripaludis (strain C6 / ATCC BAA-1332).